Consider the following 1059-residue polypeptide: RNA-binding protein 26 (1059 aa).

Basic and acidic residues-rich tracts occupy residues 98 to 114 (EKEI…EKEK) and 130 to 147 (RHKD…DRES). The disordered stretch occupies residues 98-275 (EKEIKKDEVN…PVDNSYASGS (178 aa)). Residues 172-182 (LNSNKVQNAKN) are compositionally biased toward polar residues. The span at 184-213 (RSRDDRKRDDRFRKREYDRNVPRRDSYRDR) shows a compositional bias: basic and acidic residues. The segment covering 214–231 (YNRRRGRSRSYSRSRSRS) has biased composition (basic residues). A compositionally biased stretch (basic and acidic residues) spans 232 to 266 (WSKERQRDRDRSRSRTRSRDKDSGKPKFDLDRPDP). Residues 327-355 (QMQKKRCRDYDEKGFCMRGDMCPFDHGSD) form a C3H1-type zinc finger. Pro residues predominate over residues 375–428 (PVLEGPPPPGLPPPPSLLTPPPVNLQPPPVPPPGPLPPSLPPVTGPPPPLPPLQ). The segment at 375-443 (PVLEGPPPPG…APPNSATSSV (69 aa)) is disordered. Residues 434-443 (APPNSATSSV) show a composition bias toward low complexity. One can recognise an RRM 1 domain in the interval 581–655 (TKLELRRIPP…RFIRMYWHRE (75 aa)). A coiled-coil region spans residues 771–873 (GDAQKKKQEA…LLDTELDLYN (103 aa)). The 70-residue stretch at 942 to 1011 (RALKISGFTE…QDLKLAWNKP (70 aa)) folds into the RRM 2 domain. Residues 1010-1059 (KPVPNASSTEVEDADQEEEEFHEDSIVDDSLLQDDDEEEEDDNESRSWRR) form a disordered region. Composition is skewed to acidic residues over residues 1019–1031 (EVED…EEFH) and 1040–1052 (LLQD…EDDN).

May be involved in the turnover of nuclear polyadenylated (pA+) RNA. The chain is RNA-binding protein 26 from Xenopus laevis (African clawed frog).